The primary structure comprises 393 residues: Pre-mRNA-splicing regulator WTAP (393 aa).

The disordered stretch occupies residues Gln-242–Leu-393. Basic and acidic residues predominate over residues Glu-254 to Gly-267. Polar residues-rich tracts occupy residues Gly-272–Ser-286 and Asp-321–Thr-353. Residues Asp-354–Val-365 are compositionally biased toward basic and acidic residues. Residues Gly-369–Leu-393 are compositionally biased toward polar residues.

Belongs to the fl(2)d family. In terms of assembly, component of the WMM complex, a N6-methyltransferase complex composed of a catalytic subcomplex, named MAC, and of an associated subcomplex, named MACOM. Component of the MACOM subcomplex.

Its subcellular location is the nucleus speckle. It is found in the nucleus. The protein localises to the nucleoplasm. Its function is as follows. Associated component of the WMM complex, a complex that mediates N6-methyladenosine (m6A) methylation of RNAs, a modification that plays a role in the efficiency of mRNA splicing and RNA processing. The sequence is that of Pre-mRNA-splicing regulator WTAP from Xenopus laevis (African clawed frog).